A 224-amino-acid polypeptide reads, in one-letter code: MNYFRYKQFNKDVITVAVGYYLRYALSYRDISEILRGRGVNVHHSTVYRWVQEYAPILYQIWKKKHKKAYYKWRIDETYIKIKGKWSYLYRAIDAEGHTLDIWLRKQRDNHSAYAFIKRLIKQFGKPQKVITDQAPSTKVAMAKVIKAFKLKPDCHCTSKYLNNLIEQDHRHIKVRKTRYQSINTAKNTLKGIECIYALYKKNRRSLQIYGFSPCHEISIMLAS.

The H-T-H motif DNA-binding region spans 33–52; that stretch reads EILRGRGVNVHHSTVYRWVQ. One can recognise an Integrase catalytic domain in the interval 73–222; that stretch reads WRIDETYIKI…SPCHEISIML (150 aa).

Its function is as follows. Involved in the transposition of the insertion sequence. The chain is Transposase for insertion sequence element IS257 in transposon Tn4003 from Staphylococcus aureus.